Here is a 560-residue protein sequence, read N- to C-terminus: Membrane protein insertase YidC (560 aa).

A run of 6 helical transmembrane segments spans residues 5–25 (IINLIAAIILSLSIIFGWQYF), 334–354 (AIDFGWFYIITKPVFYAMNFF), 357–377 (YVGNFGVSILIVTVIIKLLMF), 431–451 (LPILVQIPVFFSIYKVLYVTI), 476–496 (LFGLLPFAPPSFLMIGAWPIL), and 522–542 (FMPLIFLFMFSSFPVGLLIYW).

The protein belongs to the OXA1/ALB3/YidC family. Type 1 subfamily. In terms of assembly, interacts with the Sec translocase complex via SecD. Specifically interacts with transmembrane segments of nascent integral membrane proteins during membrane integration.

The protein localises to the cell inner membrane. Functionally, required for the insertion and/or proper folding and/or complex formation of integral membrane proteins into the membrane. Involved in integration of membrane proteins that insert both dependently and independently of the Sec translocase complex, as well as at least some lipoproteins. Aids folding of multispanning membrane proteins. The protein is Membrane protein insertase YidC of Rickettsia rickettsii (strain Sheila Smith).